The chain runs to 329 residues: MNKKTIAMLGAGSWGTAVAIHLAKIGHKTLLWSHNPQHVALMAEQHSNPAYLPGIPFPENLIPSDDLIECVQLADYVIIAVPSHAFAEIINKIPKPTQGLAWLTKGVDPASHQLLSQLVASRFGVDFPIAVISGPSFAKEVARFLPTALTLASNNTNYQKKMHQLFHHDNIRVYLSDDLIGVQLCGAVKNILAIACGISDGLGYGANAKAALITRGLAEMTRLGLSMGARQDTFLGLAGVGDLVLTCTDDQSRNRRFGLLLGREVPIPEAEHQIGQVVEGKHNAAQICAIANKNKVEMPICEQINALLHGIVHAQQAVNNLMSRPAKEE.

Residues Ser13, Trp14, His34, and Lys105 each coordinate NADPH. Sn-glycerol 3-phosphate is bound by residues Lys105, Gly134, and Ser136. Ala138 lines the NADPH pocket. Lys189, Asp242, Ser252, Arg253, and Asn254 together coordinate sn-glycerol 3-phosphate. The Proton acceptor role is filled by Lys189. Residue Arg253 participates in NADPH binding. Residues Val277 and Glu279 each coordinate NADPH.

This sequence belongs to the NAD-dependent glycerol-3-phosphate dehydrogenase family.

Its subcellular location is the cytoplasm. The enzyme catalyses sn-glycerol 3-phosphate + NAD(+) = dihydroxyacetone phosphate + NADH + H(+). It carries out the reaction sn-glycerol 3-phosphate + NADP(+) = dihydroxyacetone phosphate + NADPH + H(+). It functions in the pathway membrane lipid metabolism; glycerophospholipid metabolism. In terms of biological role, catalyzes the reduction of the glycolytic intermediate dihydroxyacetone phosphate (DHAP) to sn-glycerol 3-phosphate (G3P), the key precursor for phospholipid synthesis. This is Glycerol-3-phosphate dehydrogenase [NAD(P)+] from Legionella pneumophila (strain Paris).